We begin with the raw amino-acid sequence, 612 residues long: Large ribosomal subunit assembly factor BipA (612 aa).

Residues 5–200 (NDLRNIAIIA…TIIKHVPAPV (196 aa)) enclose the tr-type G domain. GTP is bound by residues 17-22 (DHGKTT) and 130-133 (NKID).

The protein belongs to the TRAFAC class translation factor GTPase superfamily. Classic translation factor GTPase family. BipA subfamily. As to quaternary structure, monomer.

Its subcellular location is the cytoplasm. The enzyme catalyses GTP + H2O = GDP + phosphate + H(+). In terms of biological role, a 50S ribosomal subunit assembly protein with GTPase activity, required for 50S subunit assembly at low temperatures, may also play a role in translation. Binds GTP and analogs. Binds the 70S ribosome between the 30S and 50S subunits, in a similar position as ribosome-bound EF-G; it contacts a number of ribosomal proteins, both rRNAs and the A-site tRNA. This chain is Large ribosomal subunit assembly factor BipA, found in Bacillus subtilis (strain 168).